A 208-amino-acid chain; its full sequence is Thymidylate kinase (208 aa).

10–17 (GIDGCGKT) contributes to the ATP binding site.

Belongs to the thymidylate kinase family.

It carries out the reaction dTMP + ATP = dTDP + ADP. Functionally, phosphorylation of dTMP to form dTDP in both de novo and salvage pathways of dTTP synthesis. This chain is Thymidylate kinase, found in Caldanaerobacter subterraneus subsp. tengcongensis (strain DSM 15242 / JCM 11007 / NBRC 100824 / MB4) (Thermoanaerobacter tengcongensis).